The primary structure comprises 130 residues: Iron-sulfur cluster insertion protein ErpA (130 aa).

Residues C58, C122, and C124 each contribute to the iron-sulfur cluster site.

Belongs to the HesB/IscA family. In terms of assembly, homodimer. Requires iron-sulfur cluster as cofactor.

Its function is as follows. Required for insertion of 4Fe-4S clusters for at least IspG. This is Iron-sulfur cluster insertion protein ErpA from Stenotrophomonas maltophilia (strain R551-3).